A 584-amino-acid polypeptide reads, in one-letter code: Arginine--tRNA ligase (584 aa).

The 'HIGH' region signature appears at 125 to 135 (PNIAKEMHVGH).

This sequence belongs to the class-I aminoacyl-tRNA synthetase family. Monomer.

The protein localises to the cytoplasm. The enzyme catalyses tRNA(Arg) + L-arginine + ATP = L-arginyl-tRNA(Arg) + AMP + diphosphate. This chain is Arginine--tRNA ligase, found in Thermosynechococcus vestitus (strain NIES-2133 / IAM M-273 / BP-1).